The chain runs to 458 residues: uncharacterized protein (458 aa).

It belongs to the glycerate kinase type-2 family.

This is an uncharacterized protein from Caenorhabditis elegans.